The primary structure comprises 221 residues: Probable septum site-determining protein MinC (221 aa).

Belongs to the MinC family. Interacts with MinD and FtsZ.

In terms of biological role, cell division inhibitor that blocks the formation of polar Z ring septums. Rapidly oscillates between the poles of the cell to destabilize FtsZ filaments that have formed before they mature into polar Z rings. Prevents FtsZ polymerization. The polypeptide is Probable septum site-determining protein MinC (Shewanella woodyi (strain ATCC 51908 / MS32)).